The chain runs to 434 residues: Glutamate-1-semialdehyde 2,1-aminomutase (434 aa).

Position 270 is an N6-(pyridoxal phosphate)lysine (Lys-270).

Belongs to the class-III pyridoxal-phosphate-dependent aminotransferase family. HemL subfamily. In terms of assembly, homodimer. Pyridoxal 5'-phosphate serves as cofactor.

It is found in the cytoplasm. It catalyses the reaction (S)-4-amino-5-oxopentanoate = 5-aminolevulinate. It participates in porphyrin-containing compound metabolism; protoporphyrin-IX biosynthesis; 5-aminolevulinate from L-glutamyl-tRNA(Glu): step 2/2. This chain is Glutamate-1-semialdehyde 2,1-aminomutase, found in Pelotomaculum thermopropionicum (strain DSM 13744 / JCM 10971 / SI).